Reading from the N-terminus, the 403-residue chain is Anti-sigma-I factor RsgI8 (403 aa).

Topologically, residues 1–59 (MTKQKGTILKLKNNLAIIMTSDCKIVSIKRQPGMYEGLEISFNKNEIINKKNKLAFYSR) are cytoplasmic. One can recognise a RsgI N-terminal anti-sigma domain in the interval 4–51 (QKGTILKLKNNLAIIMTSDCKIVSIKRQPGMYEGLEISFNKNEIINKK). A helical membrane pass occupies residues 60-80 (IAAGIAAIFIIMVISFNLFNN). The Extracellular portion of the chain corresponds to 81 to 403 (NDVYAYVAID…KAKNSIEKMP (323 aa)). Composition is skewed to basic and acidic residues over residues 254–314 (VHNV…EPAK), 324–335 (LPKDKTIPEEKT), and 349–403 (VEPK…EKMP). The segment at 254-403 (VHNVKKEEPK…KAKNSIEKMP (150 aa)) is disordered.

As to quaternary structure, interacts (via RsgI N-terminal anti-sigma domain) with SigI8.

It localises to the cell membrane. In terms of biological role, anti-sigma factor for SigI8. Negatively regulates SigI8 activity through direct interaction. This is Anti-sigma-I factor RsgI8 from Acetivibrio thermocellus (strain ATCC 27405 / DSM 1237 / JCM 9322 / NBRC 103400 / NCIMB 10682 / NRRL B-4536 / VPI 7372) (Clostridium thermocellum).